Reading from the N-terminus, the 382-residue chain is Heme A synthase (382 aa).

Transmembrane regions (helical) follow at residues 25–45, 112–132, 141–161, 176–196, 211–231, 270–290, 303–323, and 327–347; these read GAVRAWLYLLAVLVVAMVAVG, LLGRIVGLVFFLPFAWFWARG, GLLGLGLLGGLQGAIGWIMVA, LALHLTTASLILAGLVWLAAG, VVACLLPALVLVQIWLGGLVA, LALVQFNHRLFAYLVVAVAIA, AAAGRAMGVAALATAQMGLGI, and LLHVPLWAGLAHQVFAMAVLI. His277 contacts heme. Residue His338 coordinates heme.

This sequence belongs to the COX15/CtaA family. Type 2 subfamily. In terms of assembly, interacts with CtaB. Requires heme b as cofactor.

It localises to the cell membrane. The enzyme catalyses Fe(II)-heme o + 2 A + H2O = Fe(II)-heme a + 2 AH2. Its pathway is porphyrin-containing compound metabolism; heme A biosynthesis; heme A from heme O: step 1/1. Catalyzes the conversion of heme O to heme A by two successive hydroxylations of the methyl group at C8. The first hydroxylation forms heme I, the second hydroxylation results in an unstable dihydroxymethyl group, which spontaneously dehydrates, resulting in the formyl group of heme A. The chain is Heme A synthase from Methylorubrum extorquens (strain CM4 / NCIMB 13688) (Methylobacterium extorquens).